A 476-amino-acid chain; its full sequence is Protein transport protein SEC61 subunit alpha (476 aa).

Topologically, residues 1–33 (MSSLRFLDLVKPFVPFLPEVQQPETKIPFNQKL) are cytoplasmic. A helical membrane pass occupies residues 34–54 (MWTGLTLLIFLVMSQMPLYGI). The Lumenal segment spans residues 55 to 76 (VSSDTSDPLYWLRMMMASNRGT). A helical transmembrane segment spans residues 77-97 (LMELGITPIISSGMVFQLLAG). The Cytoplasmic segment spans residues 98–119 (THMIDVNLDLKADRELYQTAQK). Residues 120–140 (LFAVILSIGTATVYVFTGLYG) form a helical membrane-spanning segment. The Lumenal segment spans residues 141 to 146 (PPSDLG). Residues 147-167 (AGIVFLLILQLVVAGMIVILL) form a helical membrane-spanning segment. Over 168–246 (DELLQKGYGL…YRQNLPNIMN (79 aa)) the chain is Cytoplasmic. Residues 247–267 (LLATLVVFAAVIYLQGFRVEI) traverse the membrane as a helical segment. Residues 268–361 (PVKSSRQRGA…KDALLDPIHT (94 aa)) lie on the Lumenal side of the membrane. Residues 362-382 (AVYIAYMLTACAVFSKTWIEV) traverse the membrane as a helical segment. The Cytoplasmic segment spans residues 383 to 415 (SGSSPRDVAKQLKDQGLVMAGHREQSMYKELKR). The helical transmembrane segment at 416 to 434 (IIPTAAAFGGACIGALSVA) threads the bilayer. At 435–440 (SDLMGA) the chain is on the lumenal side. Residues 441–458 (LGSGTGTLLAVTIIYGYF) form a helical membrane-spanning segment. Topologically, residues 459-476 (EIAAKEGDLQGMKGMIMG) are cytoplasmic.

Belongs to the SecY/SEC61-alpha family. Heterotrimeric complex composed of SEC61-alpha, SEC61-beta and SEC61-gamma.

The protein resides in the endoplasmic reticulum membrane. Functionally, appears to play a crucial role in the insertion of secretory and membrane polypeptides into the ER. It is required for assembly of membrane and secretory proteins and is essential for cell growth. It interacts with other membrane proteins required for protein translocation. Upon binding to SEC62/63 complex, secretory precursor polypeptides may engage SEC61 to begin membrane penetration event. A cycle of assembly and disassembly of SEC62/63 from SEC61 may govern the activity of the translocase. In Neurospora crassa (strain ATCC 24698 / 74-OR23-1A / CBS 708.71 / DSM 1257 / FGSC 987), this protein is Protein transport protein SEC61 subunit alpha (sec-61).